A 1180-amino-acid chain; its full sequence is Pesticidal crystal protein Cry4Aa (1180 aa).

This sequence belongs to the delta endotoxin family.

In terms of biological role, promotes colloidosmotic lysis by binding to the midgut epithelial cells of insects. This chain is Pesticidal crystal protein Cry4Aa (cry4Aa), found in Bacillus thuringiensis subsp. israelensis.